The following is a 241-amino-acid chain: MIITMLDAQQLSKSYTLAGKRTINILQGVTLRVHEGEMVTIVGASGSGKTTLLNLLGTLDTPDSGTIVFNNQPLFQNNRYTLSRKALAAFRNRQIGFVFQFHHLLSDFTALENVAMAEFIATGNLQAAKVRAAELLTNFGLSERLDHLPSELSGGEQQRVAIARALMNNPKLVLADEPSGNLDQRNSQLLYELMARISKEQRTAFIIVTHNYDYAAMADRCFCMENGLLGEYKSYEKSTAV.

The region spanning 6-241 (LDAQQLSKSY…YKSYEKSTAV (236 aa)) is the ABC transporter domain. 43-50 (GASGSGKT) contributes to the ATP binding site.

This sequence belongs to the ABC transporter superfamily. Lipoprotein translocase (TC 3.A.1.125) family. In terms of assembly, the complex is composed of two ATP-binding proteins (LolD) and two transmembrane proteins (LolC and LolE).

The protein localises to the cell inner membrane. Part of the ABC transporter complex LolCDE involved in the translocation of mature outer membrane-directed lipoproteins, from the inner membrane to the periplasmic chaperone, LolA. Responsible for the formation of the LolA-lipoprotein complex in an ATP-dependent manner. This Chlorobium chlorochromatii (strain CaD3) protein is Lipoprotein-releasing system ATP-binding protein LolD 2.